We begin with the raw amino-acid sequence, 287 residues long: uncharacterized protein (287 aa).

10 consecutive transmembrane segments (helical) span residues 7–28 (LLLT…RAAL), 32–54 (AIDA…AVLL), 67–86 (GWRG…YAYV), 91–113 (GTGA…LLRG), 120–139 (ALLG…LPGA), 144–163 (LGGA…YTLL), 170–192 (PLAV…LLAF), 202–224 (GLAY…WYSA), 231–253 (IQGA…LLLG), and 263–280 (ATLA…PRLG). 2 consecutive EamA domains span residues 15-136 (LAFA…FLLL) and 155-276 (LAWG…LILA).

It localises to the cell membrane. This is an uncharacterized protein from Pseudomonas aeruginosa (strain ATCC 15692 / DSM 22644 / CIP 104116 / JCM 14847 / LMG 12228 / 1C / PRS 101 / PAO1).